The sequence spans 80 residues: Small ribosomal subunit protein bS16 (80 aa).

This sequence belongs to the bacterial ribosomal protein bS16 family.

This chain is Small ribosomal subunit protein bS16, found in Wigglesworthia glossinidia brevipalpis.